Reading from the N-terminus, the 243-residue chain is ATP synthase subunit a, chloroplastic (243 aa).

Transmembrane regions (helical) follow at residues 32–52 (AQVLITSWFVLGLLLGIALIA), 91–111 (IPFVGTLFLFIFVSNWSGALI), 130–150 (INTTVALALLTSVAYFYAGLN), 195–215 (LVVAVLVSLVPLVIPVPMMFL), and 216–236 (GLFTSGIQALIFATLAGAYIG).

It belongs to the ATPase A chain family. As to quaternary structure, F-type ATPases have 2 components, CF(1) - the catalytic core - and CF(0) - the membrane proton channel. CF(1) has five subunits: alpha(3), beta(3), gamma(1), delta(1), epsilon(1). CF(0) has four main subunits: a, b, b' and c.

The protein resides in the plastid. It is found in the chloroplast thylakoid membrane. Its function is as follows. Key component of the proton channel; it plays a direct role in the translocation of protons across the membrane. This is ATP synthase subunit a, chloroplastic from Chaetosphaeridium globosum (Charophycean green alga).